Consider the following 475-residue polypeptide: Beta-amyrin 6-beta-monooxygenase (475 aa).

The chain crosses the membrane as a helical span at residues 6–22; the sequence is LYSLAFALVYISLYFIF. Cysteine 423 is a binding site for heme.

This sequence belongs to the cytochrome P450 family. Requires heme as cofactor. In terms of tissue distribution, specifically expressed in roots.

It is found in the membrane. It catalyses the reaction beta-amyrin + reduced [NADPH--hemoprotein reductase] + O2 = daturadiol + oxidized [NADPH--hemoprotein reductase] + H2O + H(+). Catalyzes the C-6 beta-hydroxylation of beta-amyrin to form daturadiol. Catalyzes the C-6 beta-hydroxylation of alpha-amyrin to form 6-beta-hydroxy-alpha-amyrin. The polypeptide is Beta-amyrin 6-beta-monooxygenase (Solanum lycopersicum (Tomato)).